Reading from the N-terminus, the 208-residue chain is FMRFamide-like neuropeptide 18 (208 aa).

Positions 1-21 (MQRWSGVLLISLCCLLRGALA) are cleaved as a signal peptide. The propeptide occupies 22–83 (YTEPIYEIVE…VWEKRESSVQ (62 aa)). Phe-93 bears the Phenylalanine amide mark. Residues 97 to 101 (AYFDE) constitute a propeptide that is removed on maturation. Phe-111 is modified (phenylalanine amide). Residues 115–119 (SYFDE) constitute a propeptide that is removed on maturation. Phe-129 carries the post-translational modification Phenylalanine amide. A propeptide spanning residues 133-137 (DVPMD) is cleaved from the precursor. Phe-147 is modified (phenylalanine amide). The propeptide occupies 151-158 (DYMADSFD). Residues Phe-169 and Phe-180 each carry the phenylalanine amide modification. Residues 184-195 (SDLEEHYAGVLL) constitute a propeptide that is removed on maturation. Phe-205 bears the Phenylalanine amide mark.

The protein belongs to the FARP (FMRFamide related peptide) family. In terms of processing, may be processed by convertase egl-3. Expressed in head neurons and weakly in ventral nerve cord. Expressed in the interneurons AVA, AIY and RIG, the motor neuron RIM and the pharyngeal neurons M2 and M3. EMPGVLRF-amide: Expressed in cholinergic pharyngeal motoneurons M2 and M3.

The protein resides in the secreted. Its function is as follows. FMRFamide-like neuropeptides. Ligand to G-protein coupled receptor npr-1. Involved in modulating locomotion quiescence during the sleep-like state called lethargus which occurs during molting between larval and adult stages, acting via npr-1. Together with flp-1, plays a homeostatic role by acting on the GABAergic neural transmission at neuromuscular junctions to prevent overexcitation of the locomotor circuit. Plays a role in the navigational capacity of sperm and the targeting of sperm derived from males to the fertilization site in the uterus of hermaphrodites. Functionally, SVPGVLRF-amide: Excites muscle tension. Activates the G-protein coupled receptor npr-1 more effectively than other flp-18 peptides. Inhibits the activity of dissected pharyngeal myogenic muscle system. The protein is FMRFamide-like neuropeptide 18 of Caenorhabditis elegans.